The following is a 481-amino-acid chain: DNA primase DnaG (481 aa).

Residues 169–243 enclose the Toprim domain; that stretch reads DAILVVEGRA…DVDYVARAPD (75 aa). Positions 175, 217, and 219 each coordinate Mg(2+). Residues 275–393 are disordered; it reads RRRNKLAAQA…ARKEREPSEF (119 aa). A compositionally biased stretch (low complexity) spans 281–309; the sequence is AAQAAEKQAQAEAAQKAEAPAAAAPVQPQ. A compositionally biased stretch (basic and acidic residues) spans 312–393; that stretch reads YQQKEYPQRE…ARKEREPSEF (82 aa).

Belongs to the archaeal DnaG primase family. As to quaternary structure, forms a ternary complex with MCM helicase and DNA. Component of the archaeal exosome complex. Mg(2+) is required as a cofactor.

It catalyses the reaction ssDNA + n NTP = ssDNA/pppN(pN)n-1 hybrid + (n-1) diphosphate.. Its function is as follows. RNA polymerase that catalyzes the synthesis of short RNA molecules used as primers for DNA polymerase during DNA replication. Also part of the exosome, which is a complex involved in RNA degradation. Acts as a poly(A)-binding protein that enhances the interaction between heteromeric, adenine-rich transcripts and the exosome. This chain is DNA primase DnaG, found in Methanocella arvoryzae (strain DSM 22066 / NBRC 105507 / MRE50).